A 163-amino-acid chain; its full sequence is Probable chemoreceptor glutamine deamidase CheD (163 aa).

Belongs to the CheD family.

It catalyses the reaction L-glutaminyl-[protein] + H2O = L-glutamyl-[protein] + NH4(+). Probably deamidates glutamine residues to glutamate on methyl-accepting chemotaxis receptors (MCPs), playing an important role in chemotaxis. This Borrelia garinii subsp. bavariensis (strain ATCC BAA-2496 / DSM 23469 / PBi) (Borreliella bavariensis) protein is Probable chemoreceptor glutamine deamidase CheD.